The primary structure comprises 334 residues: Beta-hexosaminidase (334 aa).

Residues Asp-60, Arg-68, Arg-133, and 163–164 (KH) each bind substrate. The active-site Proton donor/acceptor is His-176. Asp-247 functions as the Nucleophile in the catalytic mechanism.

Belongs to the glycosyl hydrolase 3 family. NagZ subfamily.

The protein localises to the cytoplasm. It catalyses the reaction Hydrolysis of terminal non-reducing N-acetyl-D-hexosamine residues in N-acetyl-beta-D-hexosaminides.. Its pathway is cell wall biogenesis; peptidoglycan recycling. Plays a role in peptidoglycan recycling by cleaving the terminal beta-1,4-linked N-acetylglucosamine (GlcNAc) from peptide-linked peptidoglycan fragments, giving rise to free GlcNAc, anhydro-N-acetylmuramic acid and anhydro-N-acetylmuramic acid-linked peptides. The protein is Beta-hexosaminidase of Xanthomonas axonopodis pv. citri (strain 306).